The chain runs to 341 residues: UDP-3-O-acylglucosamine N-acyltransferase (341 aa).

H241 functions as the Proton acceptor in the catalytic mechanism.

This sequence belongs to the transferase hexapeptide repeat family. LpxD subfamily. In terms of assembly, homotrimer.

It carries out the reaction a UDP-3-O-[(3R)-3-hydroxyacyl]-alpha-D-glucosamine + a (3R)-hydroxyacyl-[ACP] = a UDP-2-N,3-O-bis[(3R)-3-hydroxyacyl]-alpha-D-glucosamine + holo-[ACP] + H(+). It participates in bacterial outer membrane biogenesis; LPS lipid A biosynthesis. Functionally, catalyzes the N-acylation of UDP-3-O-acylglucosamine using 3-hydroxyacyl-ACP as the acyl donor. Is involved in the biosynthesis of lipid A, a phosphorylated glycolipid that anchors the lipopolysaccharide to the outer membrane of the cell. In Saccharophagus degradans (strain 2-40 / ATCC 43961 / DSM 17024), this protein is UDP-3-O-acylglucosamine N-acyltransferase.